The sequence spans 83 residues: Small ribosomal subunit protein eS21 (83 aa).

M1 is subject to N-acetylmethionine. K41 participates in a covalent cross-link: Glycyl lysine isopeptide (Lys-Gly) (interchain with G-Cter in SUMO2).

It belongs to the eukaryotic ribosomal protein eS21 family. As to quaternary structure, component of the 40S small ribosomal subunit.

It localises to the cytoplasm. Its subcellular location is the cytosol. It is found in the rough endoplasmic reticulum. Component of the small ribosomal subunit. The ribosome is a large ribonucleoprotein complex responsible for the synthesis of proteins in the cell. This chain is Small ribosomal subunit protein eS21 (RPS21), found in Oryctolagus cuniculus (Rabbit).